Consider the following 171-residue polypeptide: Peptide deformylase (171 aa).

The Fe cation site is built by Cys91 and His133. Glu134 is a catalytic residue. His137 is a Fe cation binding site.

The protein belongs to the polypeptide deformylase family. Requires Fe(2+) as cofactor.

The catalysed reaction is N-terminal N-formyl-L-methionyl-[peptide] + H2O = N-terminal L-methionyl-[peptide] + formate. Its function is as follows. Removes the formyl group from the N-terminal Met of newly synthesized proteins. Requires at least a dipeptide for an efficient rate of reaction. N-terminal L-methionine is a prerequisite for activity but the enzyme has broad specificity at other positions. In Cronobacter sakazakii (strain ATCC BAA-894) (Enterobacter sakazakii), this protein is Peptide deformylase.